A 134-amino-acid polypeptide reads, in one-letter code: Small ribosomal subunit protein uS8 (134 aa).

Belongs to the universal ribosomal protein uS8 family. As to quaternary structure, part of the 30S ribosomal subunit. Contacts proteins S5 and S12.

One of the primary rRNA binding proteins, it binds directly to 16S rRNA central domain where it helps coordinate assembly of the platform of the 30S subunit. The sequence is that of Small ribosomal subunit protein uS8 from Thermotoga sp. (strain RQ2).